Here is a 166-residue protein sequence, read N- to C-terminus: Ubiquitin-conjugating enzyme E2 7 (166 aa).

Ala-2 is modified (N-acetylalanine). A UBC core domain is found at 4-164 (QASLLLQKQL…VSRCVRKSQE (161 aa)). Residue Cys-89 is the Glycyl thioester intermediate of the active site.

This sequence belongs to the ubiquitin-conjugating enzyme family.

The catalysed reaction is S-ubiquitinyl-[E1 ubiquitin-activating enzyme]-L-cysteine + [E2 ubiquitin-conjugating enzyme]-L-cysteine = [E1 ubiquitin-activating enzyme]-L-cysteine + S-ubiquitinyl-[E2 ubiquitin-conjugating enzyme]-L-cysteine.. It participates in protein modification; protein ubiquitination. In terms of biological role, accepts the ubiquitin from the E1 complex and catalyzes its covalent attachment to other proteins. Involved in the formation of multiubiquitin chains. Signal the protein for selective degradation. This Arabidopsis thaliana (Mouse-ear cress) protein is Ubiquitin-conjugating enzyme E2 7 (UBC7).